Consider the following 696-residue polypeptide: Glycosyltransferase GlyA (696 aa).

Positions 1–301 (MLVDDKITVI…NQLSRQEESE (301 aa)) are GT2 domain. The tract at residues 302–556 (KKAIVLAANY…TELGQNHHLH (255 aa)) is GT8 domain. Residues 308-313 (AANYGY) and 399-400 (DC) contribute to the UDP site. 3 residues coordinate Mn(2+): aspartate 399, aspartate 401, and histidine 518. UDP is bound at residue 518-524 (HYLSHRK).

The protein in the N-terminal section; belongs to the glycosyltransferase 2 family. In the central section; belongs to the glycosyltransferase 8 family.

It participates in protein modification; protein glycosylation. Involved in the polymorphic O-glycosylation of the serine-rich repeat protein PsrP. Catalyzes the fourth step in glycosylation of PsrP in this bacteria. Can transfer the sugar from UDP-galactose to the terminal sugar moiety of PsrP-GlcNAc-Glc-Gal or of PsrP-GlcNAc-Glc-Glc (using truncated substrates with the PsrP SSR1 domain). Has hydrolytic activity against UDP-galactose and to a lesser extent against UDP-glucose. This is Glycosyltransferase GlyA from Streptococcus pneumoniae serotype 4 (strain ATCC BAA-334 / TIGR4).